Reading from the N-terminus, the 274-residue chain is Large ribosomal subunit protein uL2 (274 aa).

Disordered regions lie at residues 37-59 (KAKN…GGHK) and 222-262 (GAAM…RTNK). Over residues 50-59 (TTRHKGGGHK) the composition is skewed to basic residues.

This sequence belongs to the universal ribosomal protein uL2 family. Part of the 50S ribosomal subunit. Forms a bridge to the 30S subunit in the 70S ribosome.

Functionally, one of the primary rRNA binding proteins. Required for association of the 30S and 50S subunits to form the 70S ribosome, for tRNA binding and peptide bond formation. It has been suggested to have peptidyltransferase activity; this is somewhat controversial. Makes several contacts with the 16S rRNA in the 70S ribosome. The chain is Large ribosomal subunit protein uL2 from Alcanivorax borkumensis (strain ATCC 700651 / DSM 11573 / NCIMB 13689 / SK2).